Consider the following 240-residue polypeptide: Phosphoribosylaminoimidazole-succinocarboxamide synthase (240 aa).

It belongs to the SAICAR synthetase family.

It catalyses the reaction 5-amino-1-(5-phospho-D-ribosyl)imidazole-4-carboxylate + L-aspartate + ATP = (2S)-2-[5-amino-1-(5-phospho-beta-D-ribosyl)imidazole-4-carboxamido]succinate + ADP + phosphate + 2 H(+). Its pathway is purine metabolism; IMP biosynthesis via de novo pathway; 5-amino-1-(5-phospho-D-ribosyl)imidazole-4-carboxamide from 5-amino-1-(5-phospho-D-ribosyl)imidazole-4-carboxylate: step 1/2. This chain is Phosphoribosylaminoimidazole-succinocarboxamide synthase, found in Pyrobaculum calidifontis (strain DSM 21063 / JCM 11548 / VA1).